Here is a 343-residue protein sequence, read N- to C-terminus: Uroporphyrinogen decarboxylase (343 aa).

Residues 23–27 (RQAGR), aspartate 73, tyrosine 149, threonine 204, and histidine 320 each bind substrate.

This sequence belongs to the uroporphyrinogen decarboxylase family. Homodimer.

Its subcellular location is the cytoplasm. The catalysed reaction is uroporphyrinogen III + 4 H(+) = coproporphyrinogen III + 4 CO2. It functions in the pathway porphyrin-containing compound metabolism; protoporphyrin-IX biosynthesis; coproporphyrinogen-III from 5-aminolevulinate: step 4/4. Functionally, catalyzes the decarboxylation of four acetate groups of uroporphyrinogen-III to yield coproporphyrinogen-III. This is Uroporphyrinogen decarboxylase from Bradyrhizobium sp. (strain BTAi1 / ATCC BAA-1182).